Reading from the N-terminus, the 1012-residue chain is RAS protein activator like-3 (1012 aa).

Disordered regions lie at residues 1-128, 147-196, and 208-229; these read MDPP…TPDV, GNED…QIHN, and KKAK…ALGS. Polar residues predominate over residues 7 to 21; that stretch reads SRASQTQPVAPSPLT. Position 18 is a phosphoserine (S18). Residues 27–39 are compositionally biased toward gly residues; sequence SGGGAEKGAGGFR. Residues 50 to 62 are compositionally biased toward polar residues; it reads QSHQETTASSQPA. S51 carries the phosphoserine modification. Residues 100–113 show a composition bias toward acidic residues; the sequence is SEPEPENPEPEPEL. S160, S162, S163, and S166 each carry phosphoserine. The segment covering 160–171 has biased composition (low complexity); that stretch reads SASSESSIHVAS. Residues 175 to 186 are compositionally biased toward basic and acidic residues; that stretch reads KDPDRTPGKTDP. In terms of domain architecture, PH spans 193-294; that stretch reads QIHNVRGLLK…WIEDLRRHFQ (102 aa). S212, S225, S229, and S232 each carry phosphoserine. Residue T235 is modified to Phosphothreonine. Residues 285–405 form the C2 domain; the sequence is WIEDLRRHFQ…APAAGLERWF (121 aa). The Ras-GAP domain occupies 475 to 683; sequence GRAQALVTDL…PAMQHFLDQV (209 aa). A disordered region spans residues 752–887; it reads PAPRTQGHSS…DKDQALGTHR (136 aa). Residues S788 and S791 each carry the phosphoserine modification. A compositionally biased stretch (basic residues) spans 826 to 841; that stretch reads PARRRPSAGPRPRPKG. Residues 889–989 are a coiled coil; it reads VGKLAELQCE…KDTIQNLQLL (101 aa). Polar residues predominate over residues 990–999; sequence PRTSESQSQP. Residues 990–1012 are disordered; that stretch reads PRTSESQSQPVPLKAPCINGDTT.

The protein localises to the cytoplasm. It is found in the cell cortex. In terms of biological role, functions as a Ras GTPase-activating protein. Plays an important role in the expansion and functions of natural killer T (NKT) cells in the liver by negatively regulating RAS activity and the down-stream ERK signaling pathway. This is RAS protein activator like-3 (RASAL3) from Bos taurus (Bovine).